A 687-amino-acid polypeptide reads, in one-letter code: Protein 4.2 (687 aa).

The N-myristoyl glycine moiety is linked to residue glycine 2. Residues 31-39 (LFVRRGQPF) form a band 3 binding region. The residue at position 247 (serine 247) is a Phosphoserine.

The protein belongs to the transglutaminase superfamily. Transglutaminase family. Component of the ankyrin-1 complex in the erythrocyte, composed of ANK1, RHCE, RHAG, SLC4A1, EPB42, GYPA, GYPB and AQP1. Interacts with SLC4A1 (via the cytoplasmic domain); this interaction is mediated by the SLC4A1 Band 3-I dimer. Interacts with ANK1 (via ANK 1-13 repeats). Interacts with AQP1 (via the C-terminal).

The protein localises to the cell membrane. It localises to the cytoplasm. Its subcellular location is the cytoskeleton. In terms of biological role, component of the ankyrin-1 complex, a multiprotein complex involved in the stability and shape of the erythrocyte membrane. This is Protein 4.2 from Bos taurus (Bovine).